Consider the following 428-residue polypeptide: Leucine-rich repeat-containing protein 42 (428 aa).

5 LRR repeats span residues 149–170 (VLCS…EEIK), 174–195 (ELTC…LEHL), 202–222 (SVTQ…RKMT), 234–255 (NLTL…GYLF), and 259–280 (KLNC…KHKL). The disordered stretch occupies residues 379-412 (KHEAISSQESKKSKKRPFEESETEQNNSSQPSKQ). Residues S406 and S407 each carry the phosphoserine modification.

This sequence belongs to the LRRC42 family.

The chain is Leucine-rich repeat-containing protein 42 (LRRC42) from Homo sapiens (Human).